A 193-amino-acid polypeptide reads, in one-letter code: Orotate phosphoribosyltransferase (193 aa).

Residues arginine 102, lysine 103, lysine 106, histidine 108, and 129 to 137 each bind 5-phospho-alpha-D-ribose 1-diphosphate; that span reads EDVVTTGGS. 2 residues coordinate orotate: threonine 133 and arginine 161.

The protein belongs to the purine/pyrimidine phosphoribosyltransferase family. PyrE subfamily. Homodimer. The cofactor is Mg(2+).

The catalysed reaction is orotidine 5'-phosphate + diphosphate = orotate + 5-phospho-alpha-D-ribose 1-diphosphate. It functions in the pathway pyrimidine metabolism; UMP biosynthesis via de novo pathway; UMP from orotate: step 1/2. Catalyzes the transfer of a ribosyl phosphate group from 5-phosphoribose 1-diphosphate to orotate, leading to the formation of orotidine monophosphate (OMP). The sequence is that of Orotate phosphoribosyltransferase from Prochlorococcus marinus (strain NATL1A).